Consider the following 598-residue polypeptide: Protein HIGH CHLOROPHYLL FLUORESCENCE PHENOTYPE 173, chloroplastic (598 aa).

Residues 1-79 constitute a chloroplast transit peptide; that stretch reads MVGSIVGSNM…ITTKESEETV (79 aa). The interval 42–106 is disordered; the sequence is VIPRAQSSSS…PTLKLDDVNP (65 aa). Residues 73 to 84 are compositionally biased toward basic and acidic residues; it reads KESEETVAKKLD. The segment covering 87–97 has biased composition (pro residues); the sequence is PPSPQSPPSPP.

This sequence belongs to the NmrA-type oxidoreductase family. As to quaternary structure, component of a high molecular weight complex containing psbA mRNA, OHP1, OHP2 and HCF244, and PSII core proteins D1/D2, HCF136 and HCF173. Interacts with LPE1.

The protein localises to the plastid. It is found in the chloroplast membrane. Its subcellular location is the chloroplast thylakoid membrane. The protein resides in the chloroplast stroma. Auxiliary factor required, together with HCF244, for the biogenesis of photosystem II (PSII), especially for the synthesis of the reaction center proteins (e.g. D1), via the regulation of the corresponding mRNA (e.g. psbA) translation initiation (ribosomal loading) and stabilization. The polypeptide is Protein HIGH CHLOROPHYLL FLUORESCENCE PHENOTYPE 173, chloroplastic (Arabidopsis thaliana (Mouse-ear cress)).